The sequence spans 387 residues: Gibberellic acid methyltransferase 2 (387 aa).

Tyr33 contributes to the S-adenosyl-L-homocysteine binding site. A gibberellin A4-binding site is contributed by Gln40. Cys74, Asn79, Asp113, Leu114, Ser146, and Phe147 together coordinate S-adenosyl-L-homocysteine. Gibberellin A4-binding residues include His167 and Trp168. Residues Asn185, Arg275, Asp276, Phe278, and Asn279 each coordinate Mg(2+).

Belongs to the methyltransferase superfamily. Type-7 methyltransferase family. SABATH subfamily. Mg(2+) serves as cofactor. Expressed in siliques and germinating seeds. Not detected in leaves, stems, flowers and roots.

It carries out the reaction gibberellin A4 + S-adenosyl-L-methionine = O-methyl gibberellin A4 + S-adenosyl-L-homocysteine. With respect to regulation, down-regulated by Zn(2+), Cu(2+) and Fe(3+). No effect of K(+), NH(4+), Na(+), Ca(2+), Mg(2+), Mn(2+) and Fe(2+). Its function is as follows. Methylates the carboxyl group of several gibberellins (GAs). Substrate preference is GA4 &gt; GA34 &gt; GA9 &gt; GA3 &gt; GA1 &gt; GA51 &gt; GA20. No activity with diterpenes abietic acid and ent-kaurenoic acid. The protein is Gibberellic acid methyltransferase 2 (GAMT2) of Arabidopsis thaliana (Mouse-ear cress).